The primary structure comprises 961 residues: Protein lin-2 (961 aa).

One can recognise a Protein kinase domain in the interval 17-281 (LSIRDVIEQG…AKEALNHEWI (265 aa)). The tract at residues 310 to 320 (KSNVLSAVNSG) is calmodulin-binding. Positions 318 to 366 (NSGRFDETTPRQDTPQTAFVDGSSPGGDCCHRGESSSNDAAEPPADKDL) are disordered. 2 L27 domains span residues 365-422 (DLSG…CEPV) and 428-479 (TSTL…RDPK). Residues 545–620 (RLVQFQKDTQ…MLRDARGQVT (76 aa)) form the PDZ domain. An SH3 domain is found at 633–717 (ACEIFVRAQF…PSPELQEWRT (85 aa)). The 173-residue stretch at 774-946 (RKTLVLLGAH…TIAQLERLVE (173 aa)) folds into the Guanylate kinase-like domain.

The protein belongs to the MAGUK family.

Functionally, may play a structural role in the induction of the vulva. May be required for the localization of signal transduction molecules (such as let-23 receptor) to either the basal membrane domain or the cell junctions. This is Protein lin-2 (lin-2) from Caenorhabditis elegans.